The sequence spans 426 residues: Serine hydroxymethyltransferase (426 aa).

(6S)-5,6,7,8-tetrahydrofolate contacts are provided by residues leucine 113 and 117–119 (GHL). Residue lysine 222 is modified to N6-(pyridoxal phosphate)lysine. 363-365 (SAF) serves as a coordination point for (6S)-5,6,7,8-tetrahydrofolate.

It belongs to the SHMT family. In terms of assembly, homodimer. It depends on pyridoxal 5'-phosphate as a cofactor.

The protein resides in the cytoplasm. The enzyme catalyses (6R)-5,10-methylene-5,6,7,8-tetrahydrofolate + glycine + H2O = (6S)-5,6,7,8-tetrahydrofolate + L-serine. Its pathway is one-carbon metabolism; tetrahydrofolate interconversion. It functions in the pathway amino-acid biosynthesis; glycine biosynthesis; glycine from L-serine: step 1/1. In terms of biological role, catalyzes the reversible interconversion of serine and glycine with tetrahydrofolate (THF) serving as the one-carbon carrier. This reaction serves as the major source of one-carbon groups required for the biosynthesis of purines, thymidylate, methionine, and other important biomolecules. Also exhibits THF-independent aldolase activity toward beta-hydroxyamino acids, producing glycine and aldehydes, via a retro-aldol mechanism. This Bacteroides thetaiotaomicron (strain ATCC 29148 / DSM 2079 / JCM 5827 / CCUG 10774 / NCTC 10582 / VPI-5482 / E50) protein is Serine hydroxymethyltransferase.